A 335-amino-acid polypeptide reads, in one-letter code: Photosystem II assembly lipoprotein Ycf48 (335 aa).

A signal peptide spans 1 to 23; it reads MSRLFSNLFNLLLIAAIGFGLSG. The N-palmitoyl cysteine moiety is linked to residue Cys24. The S-diacylglycerol cysteine moiety is linked to residue Cys24.

Belongs to the Ycf48 family. As to quaternary structure, part of early PSII assembly complexes which includes D1 (psbA) and PsbI; not found in mature PSII. Binds to the lumenal side of PSII complexes. Interacts with YidC.

The protein resides in the cellular thylakoid membrane. Its function is as follows. A factor required for optimal assembly of photosystem II (PSII), acting in the early stages of PSII assembly. Also plays a role in replacement of photodamaged D1 (psbA). Assists YidC in synthesis of chlorophyll-binding proteins. The chain is Photosystem II assembly lipoprotein Ycf48 from Prochlorococcus marinus (strain MIT 9313).